A 347-amino-acid polypeptide reads, in one-letter code: Selenide, water dikinase (347 aa).

Cys17 is an active-site residue. Residues Lys20 and 48-50 (TRD) contribute to the ATP site. Asp51 is a binding site for Mg(2+). Residues Asp68, Asp91, and 139–141 (GHS) contribute to the ATP site. Mg(2+) is bound at residue Asp91. Residue Asp227 participates in Mg(2+) binding.

It belongs to the selenophosphate synthase 1 family. Class I subfamily. Homodimer. Mg(2+) is required as a cofactor.

The catalysed reaction is hydrogenselenide + ATP + H2O = selenophosphate + AMP + phosphate + 2 H(+). Functionally, synthesizes selenophosphate from selenide and ATP. The polypeptide is Selenide, water dikinase (Escherichia coli O157:H7).